We begin with the raw amino-acid sequence, 154 residues long: Ribonuclease H (154 aa).

In terms of domain architecture, RNase H type-1 spans 1-141 (MKRIEAYTDG…ADELARAGME (141 aa)). Residues aspartate 9, glutamate 47, aspartate 69, and aspartate 133 each coordinate Mg(2+).

Belongs to the RNase H family. As to quaternary structure, monomer. Mg(2+) is required as a cofactor.

It localises to the cytoplasm. It carries out the reaction Endonucleolytic cleavage to 5'-phosphomonoester.. In terms of biological role, endonuclease that specifically degrades the RNA of RNA-DNA hybrids. This is Ribonuclease H from Brucella abortus (strain 2308).